The primary structure comprises 323 residues: Elongation factor P--(R)-beta-lysine ligase (323 aa).

74-76 serves as a coordination point for substrate; sequence SPE. ATP is bound by residues 98–100 and asparagine 107; that span reads RNE. Tyrosine 116 contacts substrate. Position 242 to 243 (242 to 243) interacts with ATP; that stretch reads EL. Glutamate 249 lines the substrate pocket. Residue glycine 298 participates in ATP binding.

The protein belongs to the class-II aminoacyl-tRNA synthetase family. EpmA subfamily. Homodimer.

It catalyses the reaction D-beta-lysine + L-lysyl-[protein] + ATP = N(6)-((3R)-3,6-diaminohexanoyl)-L-lysyl-[protein] + AMP + diphosphate + H(+). Functionally, with EpmB is involved in the beta-lysylation step of the post-translational modification of translation elongation factor P (EF-P). Catalyzes the ATP-dependent activation of (R)-beta-lysine produced by EpmB, forming a lysyl-adenylate, from which the beta-lysyl moiety is then transferred to the epsilon-amino group of a conserved specific lysine residue in EF-P. This chain is Elongation factor P--(R)-beta-lysine ligase, found in Vibrio parahaemolyticus serotype O3:K6 (strain RIMD 2210633).